We begin with the raw amino-acid sequence, 122 residues long: Large ribosomal subunit protein uL14 (122 aa).

This sequence belongs to the universal ribosomal protein uL14 family. In terms of assembly, part of the 50S ribosomal subunit. Forms a cluster with proteins L3 and L19. In the 70S ribosome, L14 and L19 interact and together make contacts with the 16S rRNA in bridges B5 and B8.

Binds to 23S rRNA. Forms part of two intersubunit bridges in the 70S ribosome. This is Large ribosomal subunit protein uL14 from Bifidobacterium longum (strain DJO10A).